The following is a 144-amino-acid chain: Prefoldin subunit alpha (144 aa).

Belongs to the prefoldin alpha subunit family. Heterohexamer of two alpha and four beta subunits.

The protein localises to the cytoplasm. Molecular chaperone capable of stabilizing a range of proteins. Seems to fulfill an ATP-independent, HSP70-like function in archaeal de novo protein folding. This chain is Prefoldin subunit alpha, found in Methanococcus aeolicus (strain ATCC BAA-1280 / DSM 17508 / OCM 812 / Nankai-3).